We begin with the raw amino-acid sequence, 448 residues long: Zinc finger and BTB domain-containing protein 14 (448 aa).

One can recognise a BTB domain in the interval 36–102 (CDIAIVVEDV…MYTAKISVKK (67 aa)). The Nuclear localization signal signature appears at 50-66 (HRCVLAACSTYFKKLFK). The segment at 130 to 193 (VSSPEENTQS…QEDGKSPTTT (64 aa)) is disordered. Acidic residues predominate over residues 156–167 (DTQDDEVEEIGD). 5 consecutive C2H2-type zinc fingers follow at residues 275–302 (IVCQACGKTFSDEARLRKHEKLHTADRP), 303–330 (FVCEMCTKGFTTQAHLKEHLKIHTGYKP), 331–358 (YSCEVCGKSFIRAPDLKKHERVHSNERP), 359–386 (FACHMCDKAFKHKSHLKDHERRHRGEKP), and 387–415 (FVCGSCTKAFAKASDLKRHENNMHSERKQ). Over residues 404-415 (RHENNMHSERKQ) the composition is skewed to basic and acidic residues. Residues 404-425 (RHENNMHSERKQVTTANSIQSE) form a disordered region. The segment covering 416–425 (VTTANSIQSE) has biased composition (polar residues).

This sequence belongs to the krueppel C2H2-type zinc-finger protein family. Interacts with ZBTB21.

Its subcellular location is the nucleus. In terms of biological role, transcriptional activator of the dopamine transporter (DAT), binding it's promoter at the consensus sequence 5'-CCTGCACAGTTCACGGA-3'. Binds to 5'-d(GCC)(n)-3' trinucleotide repeats in promoter regions and acts as a repressor of the FMR1 gene. Transcriptional repressor of MYC and thymidine kinase promoters. The protein is Zinc finger and BTB domain-containing protein 14 (ZBTB14) of Gallus gallus (Chicken).